A 356-amino-acid polypeptide reads, in one-letter code: tRNA pseudouridine synthase D (356 aa).

Asp-84 (nucleophile) is an active-site residue. Residues 159–302 form the TRUD domain; that stretch reads GVPNYYGPQR…RRGARRPIRV (144 aa).

Belongs to the pseudouridine synthase TruD family.

The enzyme catalyses uridine(13) in tRNA = pseudouridine(13) in tRNA. Responsible for synthesis of pseudouridine from uracil-13 in transfer RNAs. The polypeptide is tRNA pseudouridine synthase D (Thermus thermophilus (strain ATCC BAA-163 / DSM 7039 / HB27)).